A 416-amino-acid chain; its full sequence is CC-adding tRNA nucleotidyltransferase (416 aa).

31 to 34 is a binding site for CTP; the sequence is GAVR. Mg(2+) contacts are provided by aspartate 46 and aspartate 48. CTP contacts are provided by residues 106–107, asparagine 111, 148–157, and arginine 188; these read RD and DPLRLLRAYR.

It belongs to the tRNA nucleotidyltransferase/poly(A) polymerase family. Mg(2+) is required as a cofactor.

The catalysed reaction is a tRNA precursor + 2 CTP = a tRNA with a 3' CC end + 2 diphosphate. Functionally, tRNA nucleotidyltransferase involved in the synthesis of the tRNA CCA terminus. Adds the two cytidine residues to tRNA. The sequence is that of CC-adding tRNA nucleotidyltransferase from Synechocystis sp. (strain ATCC 27184 / PCC 6803 / Kazusa).